The sequence spans 549 residues: Glucose-6-phosphate isomerase (549 aa).

The active-site Proton donor is Glu-355. Active-site residues include His-386 and Lys-514.

The protein belongs to the GPI family.

The protein localises to the cytoplasm. The enzyme catalyses alpha-D-glucose 6-phosphate = beta-D-fructose 6-phosphate. Its pathway is carbohydrate biosynthesis; gluconeogenesis. The protein operates within carbohydrate degradation; glycolysis; D-glyceraldehyde 3-phosphate and glycerone phosphate from D-glucose: step 2/4. Catalyzes the reversible isomerization of glucose-6-phosphate to fructose-6-phosphate. The sequence is that of Glucose-6-phosphate isomerase from Salmonella schwarzengrund (strain CVM19633).